A 147-amino-acid polypeptide reads, in one-letter code: Large ribosomal subunit protein uL11 (147 aa).

Belongs to the universal ribosomal protein uL11 family. In terms of assembly, part of the ribosomal stalk of the 50S ribosomal subunit. Interacts with L10 and the large rRNA to form the base of the stalk. L10 forms an elongated spine to which L12 dimers bind in a sequential fashion forming a multimeric L10(L12)X complex. In terms of processing, one or more lysine residues are methylated.

Its function is as follows. Forms part of the ribosomal stalk which helps the ribosome interact with GTP-bound translation factors. The protein is Large ribosomal subunit protein uL11 of Bacteroides thetaiotaomicron (strain ATCC 29148 / DSM 2079 / JCM 5827 / CCUG 10774 / NCTC 10582 / VPI-5482 / E50).